Reading from the N-terminus, the 1036-residue chain is Isoleucine--tRNA ligase (1036 aa).

The 'HIGH' region motif lies at 46–56 (PFATGLPHYGH). Residues 589-593 (KMSKR) carry the 'KMSKS' region motif. Lysine 592 provides a ligand contact to ATP.

The protein belongs to the class-I aminoacyl-tRNA synthetase family. IleS type 2 subfamily. In terms of assembly, monomer. The cofactor is Zn(2+).

The protein localises to the cytoplasm. It carries out the reaction tRNA(Ile) + L-isoleucine + ATP = L-isoleucyl-tRNA(Ile) + AMP + diphosphate. Catalyzes the attachment of isoleucine to tRNA(Ile). As IleRS can inadvertently accommodate and process structurally similar amino acids such as valine, to avoid such errors it has two additional distinct tRNA(Ile)-dependent editing activities. One activity is designated as 'pretransfer' editing and involves the hydrolysis of activated Val-AMP. The other activity is designated 'posttransfer' editing and involves deacylation of mischarged Val-tRNA(Ile). In Chlamydia trachomatis serovar L2b (strain UCH-1/proctitis), this protein is Isoleucine--tRNA ligase.